The chain runs to 212 residues: Probable GTP-binding protein EngB (212 aa).

The 173-residue stretch at 40 to 212 (SLPEIAFVGK…KASLAKCIKA (173 aa)) folds into the EngB-type G domain. GTP contacts are provided by residues 48–55 (GKSNVGKS), 75–79 (GRTRQ), 93–96 (DLPG), 160–163 (TKSD), and 191–193 (VSS). 2 residues coordinate Mg(2+): Ser-55 and Thr-77.

It belongs to the TRAFAC class TrmE-Era-EngA-EngB-Septin-like GTPase superfamily. EngB GTPase family. Mg(2+) serves as cofactor.

Necessary for normal cell division and for the maintenance of normal septation. In Rickettsia akari (strain Hartford), this protein is Probable GTP-binding protein EngB.